Here is a 238-residue protein sequence, read N- to C-terminus: Type III secretion protein hrcQa (238 aa).

The segment at 66–238 is hrcQa-C; the sequence is DAEALLSLLG…SHEEHSHHEY (173 aa).

As to quaternary structure, interacts with hrcQb.

It localises to the cell inner membrane. Its function is as follows. Component of the type III secretion system, which is required for effector protein delivery, parasitism, and pathogenicity. Probably participates in the formation of a C-ring-like assembly along with hrcQb. This Pseudomonas syringae pv. syringae protein is Type III secretion protein hrcQa (hrcQa).